Here is a 567-residue protein sequence, read N- to C-terminus: MATMSRQAYADMFGPTTGDRVRLADTDLWIQVEKDFTVYGDEVKFGGGKVIRDGMGQSQLPSAKVMDLVITNALILDYWGIVKADIGIKNGRIAAIGKAGNPDVQPNVDIIVGPGTDVIAGEGSIITAGGIDSHIHFICPQQIDEALASGVTTMIGGGTGPTTGTNATTVTPGPWNMARMLEAADCFPMNLGFLGKGNASLPESLSEQISAGAIGLKLHEDWGTTPASIDNCLSVAEETDTQVAIHTDTLNESGFVEDTIAAFKDRTIHTYHTEGAGGGHAPDIIRAAGLANVLPSSTNPTRPYTVNTADEHLDMLMVCHHLDPSIPEDVAFAESRIRRETIAAEDILHDLGAFSMIASDSQAMGRVGEVVMRTWQTAHKMKVQRGSLKGDPSEHDNFRAKRYVAKYTINPALAHGMAHEIGSVEVGKLADLVLWSPAFFGVKPNLIIKGGMIAMAKMGDPNASIPTPQPVHYRPMFGAYGKARQATTMTFISQAAMDAGIPEQLTLANRIGVVKGCRTVKKKDMLLNDWLPHLEVDPQTYEVRADGQLLTCEPAEVLPMAQRYFLF.

The Urease domain occupies 129–567 (GGIDSHIHFI…LPMAQRYFLF (439 aa)). The Ni(2+) site is built by H134, H136, and K217. K217 is modified (N6-carboxylysine). H219 lines the substrate pocket. Ni(2+) is bound by residues H246 and H272. Residue H320 is the Proton donor of the active site. D360 is a binding site for Ni(2+).

It belongs to the metallo-dependent hydrolases superfamily. Urease alpha subunit family. As to quaternary structure, heterotrimer of UreA (gamma), UreB (beta) and UreC (alpha) subunits. Three heterotrimers associate to form the active enzyme. Ni cation is required as a cofactor. Carboxylation allows a single lysine to coordinate two nickel ions.

Its subcellular location is the cytoplasm. It carries out the reaction urea + 2 H2O + H(+) = hydrogencarbonate + 2 NH4(+). The protein operates within nitrogen metabolism; urea degradation; CO(2) and NH(3) from urea (urease route): step 1/1. The chain is Urease subunit alpha from Alcanivorax borkumensis (strain ATCC 700651 / DSM 11573 / NCIMB 13689 / SK2).